Here is an 84-residue protein sequence, read N- to C-terminus: Large ribosomal subunit protein bL27 (84 aa).

The tract at residues 1–21 is disordered; the sequence is MATKKAGGSSRNGRDSAGRRL.

This sequence belongs to the bacterial ribosomal protein bL27 family.

This Pelagibacter ubique (strain HTCC1062) protein is Large ribosomal subunit protein bL27.